The following is a 780-amino-acid chain: WD repeat-containing protein 27 (780 aa).

13 WD repeats span residues 3-56 (TPPE…VWSS), 61-100 (HQLL…MWNV), 111-150 (LTPR…VMDV), 154-193 (SVLV…VWDF), 200-236 (YSSS…IFSL), 291-335 (FPIL…LASF), 342-385 (HFKE…VLEI), 500-540 (NLSR…VFNA), 544-582 (GPPA…VWSV), 588-639 (MLLL…RYKP), 644-685 (KPIF…VFDL), 691-738 (AAVL…LWDL), and 752-779 (AFCT…LSQP).

This chain is WD repeat-containing protein 27 (Wdr27), found in Mus musculus (Mouse).